We begin with the raw amino-acid sequence, 401 residues long: Probable cysteine desulfurase (401 aa).

At Lys-223 the chain carries N6-(pyridoxal phosphate)lysine.

The protein belongs to the class-V pyridoxal-phosphate-dependent aminotransferase family. Csd subfamily. Pyridoxal 5'-phosphate is required as a cofactor.

The catalysed reaction is (sulfur carrier)-H + L-cysteine = (sulfur carrier)-SH + L-alanine. Its function is as follows. Catalyzes the removal of elemental sulfur and selenium atoms from L-cysteine, L-cystine, L-selenocysteine, and L-selenocystine to produce L-alanine. The protein is Probable cysteine desulfurase (csd) of Pseudomonas aeruginosa (strain ATCC 15692 / DSM 22644 / CIP 104116 / JCM 14847 / LMG 12228 / 1C / PRS 101 / PAO1).